Here is a 320-residue protein sequence, read N- to C-terminus: Cytochrome f (320 aa).

Positions Met1 to Ala35 are cleaved as a signal peptide. Tyr36, Cys56, Cys59, and His60 together coordinate heme. The helical transmembrane segment at Val286–Lys306 threads the bilayer.

Belongs to the cytochrome f family. As to quaternary structure, the 4 large subunits of the cytochrome b6-f complex are cytochrome b6, subunit IV (17 kDa polypeptide, petD), cytochrome f and the Rieske protein, while the 4 small subunits are PetG, PetL, PetM and PetN. The complex functions as a dimer. Requires heme as cofactor.

Its subcellular location is the plastid. The protein localises to the chloroplast thylakoid membrane. In terms of biological role, component of the cytochrome b6-f complex, which mediates electron transfer between photosystem II (PSII) and photosystem I (PSI), cyclic electron flow around PSI, and state transitions. This is Cytochrome f from Piper cenocladum (Ant piper).